The sequence spans 336 residues: 3-isopropylmalate dehydrogenase (336 aa).

4 residues coordinate substrate: Arg87, Arg97, Arg121, and Asp211. Positions 211, 235, and 239 each coordinate Mg(2+). Residue 271–283 (GSAPDIAGQGVAD) coordinates NAD(+).

This sequence belongs to the isocitrate and isopropylmalate dehydrogenases family. LeuB type 2 subfamily. Homodimer. Mg(2+) serves as cofactor. Requires Mn(2+) as cofactor.

The protein resides in the cytoplasm. The catalysed reaction is (2R,3S)-3-isopropylmalate + NAD(+) = 4-methyl-2-oxopentanoate + CO2 + NADH. It participates in amino-acid biosynthesis; L-leucine biosynthesis; L-leucine from 3-methyl-2-oxobutanoate: step 3/4. In terms of biological role, catalyzes the oxidation of 3-carboxy-2-hydroxy-4-methylpentanoate (3-isopropylmalate) to 3-carboxy-4-methyl-2-oxopentanoate. The product decarboxylates to 4-methyl-2 oxopentanoate. In Mycobacterium avium (strain 104), this protein is 3-isopropylmalate dehydrogenase.